The chain runs to 199 residues: Recombination protein RecR (199 aa).

The C4-type zinc-finger motif lies at 57–72 (CSICGNITEGDPCSIC). The Toprim domain occupies 80–176 (THVLVVEQPK…KVTRLAHGLS (97 aa)).

Belongs to the RecR family.

Functionally, may play a role in DNA repair. It seems to be involved in an RecBC-independent recombinational process of DNA repair. It may act with RecF and RecO. The chain is Recombination protein RecR from Levilactobacillus brevis (strain ATCC 367 / BCRC 12310 / CIP 105137 / JCM 1170 / LMG 11437 / NCIMB 947 / NCTC 947) (Lactobacillus brevis).